The chain runs to 1244 residues: Protein STU1 (1244 aa).

HEAT repeat units follow at residues 87–124 (LQGR…AASA) and 159–196 (LLFR…SAPP). The segment covering 232-243 (ETSSSFQSQSRS) has biased composition (low complexity). 3 disordered regions span residues 232–326 (ETSS…GEGV), 561–758 (LLER…EPDV), and 795–998 (AFQG…DPVK). Polar residues-rich tracts occupy residues 261-271 (RSQSVLSMRSH), 287-312 (KSQS…SSES), 574-591 (ASQS…STKS), and 607-622 (ASSN…QSSF). Composition is skewed to low complexity over residues 652–663 (SASLSSAPMRPA), 690–703 (AQSK…SPQK), and 837–850 (PPSR…YSSR). Composition is skewed to basic and acidic residues over residues 863–872 (LDSRRSRGES) and 979–998 (KVEG…DPVK). HEAT repeat units follow at residues 1038 to 1075 (TKYE…VLVT) and 1126 to 1163 (CNPP…SGLL).

Belongs to the CLASP family. As to quaternary structure, interacts with microtubules.

It localises to the cytoplasm. It is found in the cytoskeleton. The protein localises to the nucleus. The protein resides in the spindle. In terms of biological role, microtubule binding protein that promotes the stabilization of dynamic microtubules. Required for mitotic spindle formation. The polypeptide is Protein STU1 (STU1) (Coccidioides immitis (strain RS) (Valley fever fungus)).